Reading from the N-terminus, the 198-residue chain is Na(+)-translocating NADH-quinone reductase subunit E (198 aa).

Helical transmembrane passes span serine 11–valine 31, valine 35–alanine 55, phenylalanine 77–isoleucine 97, glycine 110–valine 130, valine 140–isoleucine 160, and leucine 176–isoleucine 196.

It belongs to the NqrDE/RnfAE family. As to quaternary structure, composed of six subunits; NqrA, NqrB, NqrC, NqrD, NqrE and NqrF.

The protein resides in the cell inner membrane. The enzyme catalyses a ubiquinone + n Na(+)(in) + NADH + H(+) = a ubiquinol + n Na(+)(out) + NAD(+). NQR complex catalyzes the reduction of ubiquinone-1 to ubiquinol by two successive reactions, coupled with the transport of Na(+) ions from the cytoplasm to the periplasm. NqrA to NqrE are probably involved in the second step, the conversion of ubisemiquinone to ubiquinol. The protein is Na(+)-translocating NADH-quinone reductase subunit E of Glaesserella parasuis serovar 5 (strain SH0165) (Haemophilus parasuis).